The sequence spans 152 residues: Deoxyuridine 5'-triphosphate nucleotidohydrolase (152 aa).

Substrate contacts are provided by residues 71-73 (RSG), Asn84, 88-90 (LID), and Met98.

It belongs to the dUTPase family. Requires Mg(2+) as cofactor.

It catalyses the reaction dUTP + H2O = dUMP + diphosphate + H(+). It functions in the pathway pyrimidine metabolism; dUMP biosynthesis; dUMP from dCTP (dUTP route): step 2/2. This enzyme is involved in nucleotide metabolism: it produces dUMP, the immediate precursor of thymidine nucleotides and it decreases the intracellular concentration of dUTP so that uracil cannot be incorporated into DNA. This chain is Deoxyuridine 5'-triphosphate nucleotidohydrolase, found in Shewanella halifaxensis (strain HAW-EB4).